The sequence spans 225 residues: Redox-sensing transcriptional repressor Rex (225 aa).

A DNA-binding region (H-T-H motif) is located at residues 16–55; that stretch reads IYYRYLNILLDADKKRVSSTELSEAVKVDSATIRRDFSYF. Residue 90-95 coordinates NAD(+); it reads GVGNLG.

The protein belongs to the transcriptional regulatory Rex family. Homodimer.

It localises to the cytoplasm. Modulates transcription in response to changes in cellular NADH/NAD(+) redox state. The polypeptide is Redox-sensing transcriptional repressor Rex (Lactiplantibacillus plantarum (strain ATCC BAA-793 / NCIMB 8826 / WCFS1) (Lactobacillus plantarum)).